A 280-amino-acid chain; its full sequence is 4-diphosphocytidyl-2-C-methyl-D-erythritol kinase (280 aa).

Residue Lys8 is part of the active site. Residue Pro91–Thr101 coordinates ATP. Asp133 is a catalytic residue.

It belongs to the GHMP kinase family. IspE subfamily.

The enzyme catalyses 4-CDP-2-C-methyl-D-erythritol + ATP = 4-CDP-2-C-methyl-D-erythritol 2-phosphate + ADP + H(+). Its pathway is isoprenoid biosynthesis; isopentenyl diphosphate biosynthesis via DXP pathway; isopentenyl diphosphate from 1-deoxy-D-xylulose 5-phosphate: step 3/6. In terms of biological role, catalyzes the phosphorylation of the position 2 hydroxy group of 4-diphosphocytidyl-2C-methyl-D-erythritol. This Clostridium botulinum (strain Loch Maree / Type A3) protein is 4-diphosphocytidyl-2-C-methyl-D-erythritol kinase.